The primary structure comprises 297 residues: Pyrroline-5-carboxylate reductase 1 (297 aa).

This sequence belongs to the pyrroline-5-carboxylate reductase family.

The protein localises to the cytoplasm. The catalysed reaction is L-proline + NADP(+) = (S)-1-pyrroline-5-carboxylate + NADPH + 2 H(+). The enzyme catalyses L-proline + NAD(+) = (S)-1-pyrroline-5-carboxylate + NADH + 2 H(+). Its pathway is amino-acid biosynthesis; L-proline biosynthesis; L-proline from L-glutamate 5-semialdehyde: step 1/1. In terms of biological role, catalyzes the reduction of 1-pyrroline-5-carboxylate (PCA) to L-proline. This chain is Pyrroline-5-carboxylate reductase 1 (proH), found in Bacillus subtilis (strain 168).